A 173-amino-acid polypeptide reads, in one-letter code: HAM34 protein (173 aa).

A compositionally biased stretch (low complexity) spans 22 to 89 (AAPATTPDTA…ADGTQTATAP (68 aa)). The interval 22–155 (AAPATTPDTA…ATDTTSGASH (134 aa)) is disordered. Residues 95–133 (TEESSASGEMTPTVGTDTSDQVSDSTAAGPSTPEGSMTG) are compositionally biased toward polar residues. A compositionally biased stretch (low complexity) spans 134–155 (TSTPKASDSSSSATDTTSGASH).

In terms of tissue distribution, germinating spores.

Functionally, could be a structural protein required for the infection process of B.lactucae. This Bremia lactucae (Lettuce downy mildew) protein is HAM34 protein (HAM34).